The sequence spans 272 residues: NAD kinase (272 aa).

D50 (proton acceptor) is an active-site residue. NAD(+)-binding positions include 50–51, 126–127, R152, D154, 165–170, and A189; these read DG, NE, and TAYNKS.

This sequence belongs to the NAD kinase family. The cofactor is a divalent metal cation.

The protein resides in the cytoplasm. The catalysed reaction is NAD(+) + ATP = ADP + NADP(+) + H(+). Functionally, involved in the regulation of the intracellular balance of NAD and NADP, and is a key enzyme in the biosynthesis of NADP. Catalyzes specifically the phosphorylation on 2'-hydroxyl of the adenosine moiety of NAD to yield NADP. The sequence is that of NAD kinase from Streptococcus pneumoniae (strain Hungary19A-6).